Here is a 146-residue protein sequence, read N- to C-terminus: Gonadotropin subunit beta-2 (146 aa).

Residues 1–22 form the signal peptide; the sequence is MTVEISKVFVLMMLNLFLGASS. 6 disulfides stabilise this stretch: Cys37–Cys85, Cys51–Cys100, Cys54–Cys138, Cys62–Cys116, Cys66–Cys118, and Cys121–Cys128. The N-linked (GlcNAc...) asparagine glycan is linked to Asn41.

It belongs to the glycoprotein hormones subunit beta family. In terms of assembly, heterodimer of an alpha and a beta chain.

It is found in the secreted. Involved in gametogenesis and steroidogenesis. The protein is Gonadotropin subunit beta-2 (cgbb) of Trichopodus trichopterus (Three spot gourami).